Here is a 159-residue protein sequence, read N- to C-terminus: MHISIVAVGKLKEKYLIAGINEYTKRLSAYAKIDIIEVADEKTPERASELEEEQIKEREGGRLLAKIPHDAHVIALAIEGKMQSSEQFAARLDELATYGKSKVVFVIGGSLGLSKQVMARADETLSFSKMTFPHQLMRLILLEQIYRAFRINRGEPYHK.

S-adenosyl-L-methionine-binding positions include L76, G108, and 127–132 (FSKMTF).

The protein belongs to the RNA methyltransferase RlmH family. In terms of assembly, homodimer.

It localises to the cytoplasm. It catalyses the reaction pseudouridine(1915) in 23S rRNA + S-adenosyl-L-methionine = N(3)-methylpseudouridine(1915) in 23S rRNA + S-adenosyl-L-homocysteine + H(+). Functionally, specifically methylates the pseudouridine at position 1915 (m3Psi1915) in 23S rRNA. This Geobacillus kaustophilus (strain HTA426) protein is Ribosomal RNA large subunit methyltransferase H.